Reading from the N-terminus, the 681-residue chain is 2-(S-pantetheinyl)-carbapenam-3-carboxylate methyltransferase (681 aa).

The B12-binding domain maps to 1-144 (MTVPAARSGR…IERLADHPDY (144 aa)). Cob(II)alamin is bound by residues asparagine 18, serine 72, tyrosine 74, valine 75, histidine 103, glycine 126, and glutamate 127. Residues 192–417 (RDLRFYALWE…RLYVEEPGTP (226 aa)) form the Radical SAM core domain. [4Fe-4S] cluster is bound by residues cysteine 206 and cysteine 210. Phenylalanine 212 is a binding site for 5'-deoxyadenosine. Cysteine 213 contacts [4Fe-4S] cluster. Aspartate 214 and cysteine 249 together coordinate cob(II)alamin. 5'-deoxyadenosine contacts are provided by glutamine 312, glutamate 349, and glycine 384.

It belongs to the methyltransferase superfamily. [4Fe-4S] cluster is required as a cofactor. Requires cob(II)alamin as cofactor.

The catalysed reaction is (2R,3R,5S)-2-(S-pantetheinyl)-carbapenam-3-carboxylate + AH2 + 2 S-adenosyl-L-methionine = (2R,3R,5S,6R)-6-(methyl)-2-(S-pantetheinyl)-carbapenam-3-carboxylate + 5'-deoxyadenosine + L-methionine + A + S-adenosyl-L-homocysteine + 2 H(+). It catalyses the reaction (2R,3R,5S,6R)-6-(methyl)-2-(S-pantetheinyl)-carbapenam-3-carboxylate + AH2 + 2 S-adenosyl-L-methionine = (2R,3R,5S,6R)-6-(ethyl)-2-(S-pantetheinyl)-carbapenam-3-carboxylate + 5'-deoxyadenosine + L-methionine + A + S-adenosyl-L-homocysteine + 2 H(+). It participates in antibiotic biosynthesis. Functionally, methyltransferase involved in the biosynthesis of the beta-lactam carbapenem antibiotic thienamycin. Catalyzes two consecutive S-adenosyl-L-methionine-dependent methylations to build out the C6-ethyl side chain in a stereocontrolled manner. In vitro can use methyl viologen and NADPH as the iron-sulfur cluster reductants. This Streptantibioticus cattleyicolor (strain ATCC 35852 / DSM 46488 / JCM 4925 / NBRC 14057 / NRRL 8057) (Streptomyces cattleya) protein is 2-(S-pantetheinyl)-carbapenam-3-carboxylate methyltransferase.